A 904-amino-acid polypeptide reads, in one-letter code: Toll-like receptor 3 (904 aa).

The signal sequence occupies residues M1–A26. Residues H27–T52 enclose the LRRNT domain. Topologically, residues H27–L705 are lumenal. C29 and C38 are disulfide-bonded. Residues N53, N58, and N71 are each glycosylated (N-linked (GlcNAc...) asparagine). 6 LRR repeats span residues N53–R74, R77–N98, W101–F122, N125–N146, N149–Q170, and N173–G196. A disulfide bridge links C96 with C123. An N-linked (GlcNAc...) asparagine glycan is attached at N125. A glycan (N-linked (GlcNAc...) asparagine) is linked at N197. LRR repeat units follow at residues S199–A220 and K223–E245. Residues N248, N253, N276, and N292 are each glycosylated (N-linked (GlcNAc...) asparagine). 14 LRR repeats span residues S250–G271, N276–W297, H300–G321, N324–P345, C357–G378, R381–T401, P409–W430, H433–G455, Y466–M487, N508–G529, K532–G553, H564–D585, E588–N609, and S612–P633. N399 and N414 each carry an N-linked (GlcNAc...) asparagine glycan. 3 N-linked (GlcNAc...) asparagine glycosylation sites follow: N637, N663, and N668. An LRRCT domain is found at N646–D699. Disulfide bonds link C650–C678 and C652–C697. The helical transmembrane segment at L706–F726 threads the bilayer. Over E727 to H904 the chain is Cytoplasmic. In terms of domain architecture, TIR spans F754–L897. Y759 carries the phosphotyrosine modification. Residues K812 and K831 each participate in a glycyl lysine isopeptide (Lys-Gly) (interchain with G-Cter in ubiquitin) cross-link. Y858 bears the Phosphotyrosine mark.

This sequence belongs to the Toll-like receptor family. As to quaternary structure, monomer and homodimer; dimerization is triggered by ligand-binding and is required for TLR3 signaling. Interacts (via transmembrane domain) with UNC93B1. Interacts with TICAM1 (via the TIR domain) in response to poly(I:C) and this interaction is enhanced the presence of WDFY1. Interacts with SRC; upon binding of double-stranded RNA. The tyrosine-phosphorylated form (via TIR domain) interacts with WDFY1 (via WD repeat 2) in response to poly(I:C). Post-translationally, ubiquitinated by TRIM3; leading to recognition and sorting of polyubiquitinated TLR3 by the ESCRT complexes. Ubiquitinated by ZNRF1 via 'Lys-63'-linked ubiquitin chains; leading to TLR3 lysosomal trafficking and degradation.

It is found in the endoplasmic reticulum membrane. The protein resides in the endosome membrane. Its subcellular location is the early endosome. In terms of biological role, key component of innate and adaptive immunity. TLRs (Toll-like receptors) control host immune response against pathogens through recognition of molecular patterns specific to microorganisms. TLR3 is a nucleotide-sensing TLR which is activated by double-stranded RNA, a sign of viral infection. Acts via the adapter TRIF/TICAM1, leading to NF-kappa-B activation, cytokine secretion and the inflammatory response. The chain is Toll-like receptor 3 (TLR3) from Boselaphus tragocamelus (Nilgai).